Here is a 213-residue protein sequence, read N- to C-terminus: Large ribosomal subunit protein uL1 (213 aa).

Belongs to the universal ribosomal protein uL1 family. In terms of assembly, part of the 50S ribosomal subunit.

In terms of biological role, binds directly to 23S rRNA. Probably involved in E site tRNA release. Functionally, protein L1 is also a translational repressor protein, it controls the translation of its operon by binding to its mRNA. The protein is Large ribosomal subunit protein uL1 of Methanosarcina acetivorans (strain ATCC 35395 / DSM 2834 / JCM 12185 / C2A).